A 132-amino-acid polypeptide reads, in one-letter code: Large ribosomal subunit protein bL12 (132 aa).

The protein belongs to the bacterial ribosomal protein bL12 family. Homodimer. Part of the ribosomal stalk of the 50S ribosomal subunit. Forms a multimeric L10(L12)X complex, where L10 forms an elongated spine to which 2 to 4 L12 dimers bind in a sequential fashion. Binds GTP-bound translation factors.

Its function is as follows. Forms part of the ribosomal stalk which helps the ribosome interact with GTP-bound translation factors. Is thus essential for accurate translation. The chain is Large ribosomal subunit protein bL12 from Prochlorococcus marinus (strain MIT 9211).